Consider the following 132-residue polypeptide: uncharacterized protein (132 aa).

4 consecutive transmembrane segments (helical) span residues 7–29 (LALLSFFLGLGSFFSFYVAPTLF), 44–62 (VFPVYFGLGIILVGISLFL), 69–88 (LFLSLGILNLLLLLLQEFIV), and 108–130 (GVSMGINLAILLLTLGKVLILIF).

Its subcellular location is the cell membrane. This is an uncharacterized protein from Aquifex aeolicus (strain VF5).